We begin with the raw amino-acid sequence, 508 residues long: Photosystem II CP47 reaction center protein (508 aa).

6 helical membrane-spanning segments follow: residues 21–36 (SVHIMHTALVAGWAGS), 101–115 (IMFSGLCFLAAIWHW), 140–156 (GIHLFLAGVACFGFGAF), 203–218 (IAAGTLGILAGLFHLS), 237–252 (VLSSSIAAVFFAAFVV), and 457–472 (SFALLFFFGHIWHGAR).

It belongs to the PsbB/PsbC family. PsbB subfamily. As to quaternary structure, PSII is composed of 1 copy each of membrane proteins PsbA, PsbB, PsbC, PsbD, PsbE, PsbF, PsbH, PsbI, PsbJ, PsbK, PsbL, PsbM, PsbT, PsbX, PsbY, PsbZ, Psb30/Ycf12, at least 3 peripheral proteins of the oxygen-evolving complex and a large number of cofactors. It forms dimeric complexes. Binds multiple chlorophylls. PSII binds additional chlorophylls, carotenoids and specific lipids. serves as cofactor.

It is found in the plastid. The protein localises to the chloroplast thylakoid membrane. In terms of biological role, one of the components of the core complex of photosystem II (PSII). It binds chlorophyll and helps catalyze the primary light-induced photochemical processes of PSII. PSII is a light-driven water:plastoquinone oxidoreductase, using light energy to abstract electrons from H(2)O, generating O(2) and a proton gradient subsequently used for ATP formation. In Guizotia abyssinica (Niger), this protein is Photosystem II CP47 reaction center protein.